Consider the following 102-residue polypeptide: MESVRSLVEDKPVVIFSKSSCCMSHSIQTLISGFGAKMTVYELDQFSNGQEIEKALVQMGCKPSVPAVFIGQQFIGGANQVMTLQVKNQLAAMLRRAGAIWV.

A Glutaredoxin domain is found at 1-101; the sequence is MESVRSLVED…AMLRRAGAIW (101 aa). Residue Cys-21 coordinates [2Fe-2S] cluster.

The protein belongs to the glutaredoxin family. CC-type subfamily.

The protein localises to the cytoplasm. Functionally, may only reduce GSH-thiol disulfides, but not protein disulfides. The chain is Monothiol glutaredoxin-S6 (GRXS6) from Arabidopsis thaliana (Mouse-ear cress).